Reading from the N-terminus, the 432-residue chain is Cyclic GMP-AMP synthase-like receptor (432 aa).

ATP is bound by residues Ser-59 and 71 to 73 (EFD). Positions 71, 73, and 205 each coordinate Mg(2+). GTP is bound by residues Asp-205 and 255-262 (KQTCSVLE). Residues 259–262 (SVLE), Lys-284, and 303–307 (TYALK) each bind ATP.

Belongs to the mab-21 family. Mg(2+) is required as a cofactor. Requires Mn(2+) as cofactor.

The catalysed reaction is GTP + ATP = 2',3'-cGAMP + 2 diphosphate. It carries out the reaction GTP + ATP = pppGp(2'-5')A + diphosphate. The enzyme catalyses pppGp(2'-5')A = 2',3'-cGAMP + diphosphate. Functionally, nucleotidyltransferase that catalyzes the formation of cyclic GMP-AMP (2',3'-cGAMP) from ATP and GTP and plays a key role in innate immunity. Directly binds some unknown ligand, activating the nucleotidyltransferase activity, leading to synthesis of 2',3'-cGAMP, a second messenger that binds to and activates Sting, thereby triggering the immune response via activation of the NF-kappa-B transcription factor. This chain is Cyclic GMP-AMP synthase-like receptor, found in Pocillopora damicornis (Cauliflower coral).